The primary structure comprises 329 residues: Type 2 lactosamine alpha-2,3-sialyltransferase (329 aa).

The Cytoplasmic portion of the chain corresponds to 1 to 4 (MKGY). Residues 5–25 (LVAIFLSSIFLYYVLYCILWG) traverse the membrane as a helical; Signal-anchor for type II membrane protein segment. Residues 26-329 (TNGYWFPAEE…IKKKMVINLT (304 aa)) are Lumenal-facing. N-linked (GlcNAc...) asparagine glycans are attached at residues N129, N181, N295, and N308.

It belongs to the glycosyltransferase 29 family.

Its subcellular location is the golgi apparatus membrane. It catalyses the reaction a neolactoside nLc4Cer(d18:1(4E)) + CMP-N-acetyl-beta-neuraminate = a neolactoside IV(3)-alpha-NeuAc-nLc4Cer(d18:1(4E)) + CMP + H(+). It carries out the reaction a beta-D-galactosyl-(1-&gt;4)-N-acetyl-beta-D-glucosaminyl derivative + CMP-N-acetyl-beta-neuraminate = an N-acetyl-alpha-neuraminyl-(2-&gt;3)-beta-D-galactosyl-(1-&gt;4)-N-acetyl-beta-D-glucosaminyl derivative + CMP + H(+). The catalysed reaction is a neolactoside nLc6Cer(d18:1(4E)) + CMP-N-acetyl-beta-neuraminate = a neolactoside VI(3)-alpha-NeuNAc-nLc6Cer(d18:1(4E)) + CMP + H(+). In terms of biological role, transfers the sialyl residue from CMP-N-acetyl-beta-neuraminate to the terminal galactose residue on sugar chains of glycoproteins and glycolipids. It's alpha-2,3-sialyltransferase activity is specific toward type II glycan chains (Galbeta1-4GlcNAc) on glycoproteins and glycolipids such as neolactosides nLc4Cer and nLc6Cer, whose sialyl-products serve as precursors for the Lewis X antigen. Critically involved in the synthesis of functional selectin ligands needed for neutrophil recruitment during inflammation and lymphocyte homing to the lymph nodes. The polypeptide is Type 2 lactosamine alpha-2,3-sialyltransferase (St3gal6) (Mus musculus (Mouse)).